A 428-amino-acid chain; its full sequence is Glutamyl-tRNA reductase (428 aa).

Substrate is bound by residues 55–58, Ser114, 119–121, and Gln125; these read TCNR and ETQ. The Nucleophile role is filled by Cys56. 194 to 199 is a binding site for NADP(+); that stretch reads GAGEMI.

The protein belongs to the glutamyl-tRNA reductase family. Homodimer.

The enzyme catalyses (S)-4-amino-5-oxopentanoate + tRNA(Glu) + NADP(+) = L-glutamyl-tRNA(Glu) + NADPH + H(+). Its pathway is porphyrin-containing compound metabolism; protoporphyrin-IX biosynthesis; 5-aminolevulinate from L-glutamyl-tRNA(Glu): step 1/2. Functionally, catalyzes the NADPH-dependent reduction of glutamyl-tRNA(Glu) to glutamate 1-semialdehyde (GSA). This chain is Glutamyl-tRNA reductase, found in Paraburkholderia xenovorans (strain LB400).